A 238-amino-acid chain; its full sequence is uncharacterized protein (238 aa).

Disordered stretches follow at residues 123-167 (FRQG…VHGG) and 180-238 (SAMG…AKRR). Residues 152-161 (SGHSPSPGRH) show a composition bias toward low complexity. Residues 207-238 (HRGHGHRFRLLAPRSRPRQRRGGGSRAAAKRR) show a composition bias toward basic residues.

This sequence belongs to the PNP/MTAP phosphorylase family.

This is an uncharacterized protein from Rhodospirillum rubrum.